Consider the following 374-residue polypeptide: uncharacterized protein (374 aa).

Positions 1-26 (MNNLIKAYAAGVMSAAFLFGSEGRVR) are cleaved as a signal peptide.

This is an uncharacterized protein from Treponema pallidum (strain Nichols).